The following is a 124-amino-acid chain: MRDADDRRAALWQGRMAERAAILALRLKRYAILERGYRIHGGEIDIIARRGDTIAFVEVKARPTMDGALQSITPQKRRRICRAARVWLASHPYAAAMTLRGDAVFVAPWRWPHHVAAAVELDFG.

The protein belongs to the UPF0102 family.

The polypeptide is UPF0102 protein Msil_0293 (Methylocella silvestris (strain DSM 15510 / CIP 108128 / LMG 27833 / NCIMB 13906 / BL2)).